A 236-amino-acid chain; its full sequence is MTINALLLSSSRVGDTPYLAHAIPFIKPLTTQAQKWIFIPYAGVSMSYDNYLASVVMGLAELNLDISGIHQHPDPCQAIKDADGILIGGGNTFHLLHELYRYNLINLIREKVAQGTPYVGWSAGANVSGASIKTTNDMPIIEPPSFDALKIVPFQLNPHYSNYRTPGHNGETRAQRLLEFTKVEPLTPVIAIAEGSALWRRDNTLVLLGKNPAYLFCGEQQEMLIPIGSDLSHLLK.

Catalysis depends on charge relay system residues S122, D137, and H159.

It belongs to the peptidase S51 family.

It is found in the cytoplasm. It carries out the reaction Dipeptidase E catalyzes the hydrolysis of dipeptides Asp-|-Xaa. It does not act on peptides with N-terminal Glu, Asn or Gln, nor does it cleave isoaspartyl peptides.. In terms of biological role, hydrolyzes dipeptides containing N-terminal aspartate residues. May play a role in allowing the cell to use peptide aspartate to spare carbon otherwise required for the synthesis of the aspartate family of amino acids. The polypeptide is Peptidase E (Shewanella sp. (strain W3-18-1)).